The sequence spans 155 residues: 17.6 kDa class II heat shock protein (155 aa).

Residues 38 to 155 (DAKAMAATPA…KPKTIQVQVA (118 aa)) form the sHSP domain.

This sequence belongs to the small heat shock protein (HSP20) family. In terms of assembly, may form oligomeric structures.

It localises to the cytoplasm. The polypeptide is 17.6 kDa class II heat shock protein (HSP17.6) (Arabidopsis thaliana (Mouse-ear cress)).